Here is a 241-residue protein sequence, read N- to C-terminus: Deoxyribose-phosphate aldolase (241 aa).

D95 serves as the catalytic Proton donor/acceptor. K159 (schiff-base intermediate with acetaldehyde) is an active-site residue. K188 (proton donor/acceptor) is an active-site residue.

Belongs to the DeoC/FbaB aldolase family. DeoC type 1 subfamily.

It is found in the cytoplasm. The catalysed reaction is 2-deoxy-D-ribose 5-phosphate = D-glyceraldehyde 3-phosphate + acetaldehyde. It functions in the pathway carbohydrate degradation; 2-deoxy-D-ribose 1-phosphate degradation; D-glyceraldehyde 3-phosphate and acetaldehyde from 2-deoxy-alpha-D-ribose 1-phosphate: step 2/2. In terms of biological role, catalyzes a reversible aldol reaction between acetaldehyde and D-glyceraldehyde 3-phosphate to generate 2-deoxy-D-ribose 5-phosphate. This is Deoxyribose-phosphate aldolase from Rhodopirellula baltica (strain DSM 10527 / NCIMB 13988 / SH1).